Consider the following 119-residue polypeptide: Small ribosomal subunit protein bS6 (119 aa).

The tract at residues 99-119 (KKEKKQSRKEEGSENSEKVEE) is disordered.

The protein belongs to the bacterial ribosomal protein bS6 family.

In terms of biological role, binds together with bS18 to 16S ribosomal RNA. This chain is Small ribosomal subunit protein bS6, found in Thermosipho melanesiensis (strain DSM 12029 / CIP 104789 / BI429).